Here is a 393-residue protein sequence, read N- to C-terminus: DNA-directed RNA polymerase subunit Rpo1C (393 aa).

This sequence belongs to the RNA polymerase beta' chain family. In terms of assembly, part of the 13-subunit RNA polymerase complex. Interacts with TFS4.

The protein localises to the cytoplasm. It catalyses the reaction RNA(n) + a ribonucleoside 5'-triphosphate = RNA(n+1) + diphosphate. DNA-dependent RNA polymerase (RNAP) catalyzes the transcription of DNA into RNA using the four ribonucleoside triphosphates as substrates. Forms part of the jaw domain. Its function is as follows. Reconstitution experiments show this subunit is required for basic activity. The sequence is that of DNA-directed RNA polymerase subunit Rpo1C from Sulfolobus acidocaldarius (strain ATCC 33909 / DSM 639 / JCM 8929 / NBRC 15157 / NCIMB 11770).